The following is a 415-amino-acid chain: MFSTAKNLSVVDPDLWKYVEAERHRQDEHIELIASENYTSPAVMQAQGSQLTNKYAEGYPGKRFYGGCEFVDGVEQLAIDRLKKLFGAEYANVQPHSGSQANQAVYFSVLKPGDTVMGMNLGHGGHLTHGSPANLSGKLFNIVPYGLNDKEEIDYDEMERIALECKPKLLIGGASAYALRFDWARMADIAKKVGAYFMVDMAHYAGLIAAGVYPNPVPHADFVTSTTHKTLRGPRGGLIMAKAEFEKSLNSSVFPSLQGGPLMHVIAAKAVAFLEAAQPEFKAYQEQVLKNADTMAKTLASRGLRIISGGTQSHVFLVDLRPKGLTGKAADAYLGQAHITVNKNAIPNDPESPFVTSGIRIGSPAITTRGFKEAEAAEVANLIADILDNPTDESVIAATKAKVHALTSRFPVYGA.

(6S)-5,6,7,8-tetrahydrofolate-binding positions include Leu121 and 125 to 127 (GHL). Position 229 is an N6-(pyridoxal phosphate)lysine (Lys229). (6S)-5,6,7,8-tetrahydrofolate is bound at residue 352–354 (SPF).

This sequence belongs to the SHMT family. As to quaternary structure, homodimer. The cofactor is pyridoxal 5'-phosphate.

The protein localises to the cytoplasm. The enzyme catalyses (6R)-5,10-methylene-5,6,7,8-tetrahydrofolate + glycine + H2O = (6S)-5,6,7,8-tetrahydrofolate + L-serine. It functions in the pathway one-carbon metabolism; tetrahydrofolate interconversion. It participates in amino-acid biosynthesis; glycine biosynthesis; glycine from L-serine: step 1/1. Functionally, catalyzes the reversible interconversion of serine and glycine with tetrahydrofolate (THF) serving as the one-carbon carrier. This reaction serves as the major source of one-carbon groups required for the biosynthesis of purines, thymidylate, methionine, and other important biomolecules. Also exhibits THF-independent aldolase activity toward beta-hydroxyamino acids, producing glycine and aldehydes, via a retro-aldol mechanism. The chain is Serine hydroxymethyltransferase from Methylobacillus flagellatus (strain ATCC 51484 / DSM 6875 / VKM B-1610 / KT).